We begin with the raw amino-acid sequence, 447 residues long: NADP-specific glutamate dehydrogenase (447 aa).

Substrate is bound by residues Lys-92, Gln-113, and Lys-116. Lys-128 serves as the catalytic Proton donor. Residue Gly-167 coordinates substrate. NADP(+) is bound by residues Thr-211 and Asn-242. Ser-380 contributes to the substrate binding site.

The protein belongs to the Glu/Leu/Phe/Val dehydrogenases family. In terms of assembly, homohexamer.

It catalyses the reaction L-glutamate + NADP(+) + H2O = 2-oxoglutarate + NH4(+) + NADPH + H(+). Functionally, catalyzes the reversible oxidative deamination of glutamate to alpha-ketoglutarate and ammonia. This chain is NADP-specific glutamate dehydrogenase (gdhA), found in Salmonella typhi.